The sequence spans 956 residues: Valine--tRNA ligase (956 aa).

Positions proline 69–histidine 79 match the 'HIGH' region motif. The 'KMSKS' region motif lies at lysine 566–serine 570. ATP is bound at residue lysine 569. The stretch at leucine 885–glutamine 911 forms a coiled coil.

It belongs to the class-I aminoacyl-tRNA synthetase family. ValS type 1 subfamily. Monomer.

It localises to the cytoplasm. It catalyses the reaction tRNA(Val) + L-valine + ATP = L-valyl-tRNA(Val) + AMP + diphosphate. Its function is as follows. Catalyzes the attachment of valine to tRNA(Val). As ValRS can inadvertently accommodate and process structurally similar amino acids such as threonine, to avoid such errors, it has a 'posttransfer' editing activity that hydrolyzes mischarged Thr-tRNA(Val) in a tRNA-dependent manner. In Treponema pallidum (strain Nichols), this protein is Valine--tRNA ligase.